The chain runs to 309 residues: Aspartate carbamoyltransferase catalytic subunit (309 aa).

Carbamoyl phosphate-binding residues include arginine 58 and threonine 59. Lysine 86 lines the L-aspartate pocket. Positions 108, 136, and 139 each coordinate carbamoyl phosphate. L-aspartate-binding residues include arginine 169 and arginine 223. Carbamoyl phosphate is bound by residues glycine 265 and proline 266.

This sequence belongs to the aspartate/ornithine carbamoyltransferase superfamily. ATCase family. Heterododecamer (2C3:3R2) of six catalytic PyrB chains organized as two trimers (C3), and six regulatory PyrI chains organized as three dimers (R2).

It catalyses the reaction carbamoyl phosphate + L-aspartate = N-carbamoyl-L-aspartate + phosphate + H(+). Its pathway is pyrimidine metabolism; UMP biosynthesis via de novo pathway; (S)-dihydroorotate from bicarbonate: step 2/3. Functionally, catalyzes the condensation of carbamoyl phosphate and aspartate to form carbamoyl aspartate and inorganic phosphate, the committed step in the de novo pyrimidine nucleotide biosynthesis pathway. The polypeptide is Aspartate carbamoyltransferase catalytic subunit (Akkermansia muciniphila (strain ATCC BAA-835 / DSM 22959 / JCM 33894 / BCRC 81048 / CCUG 64013 / CIP 107961 / Muc)).